A 307-amino-acid polypeptide reads, in one-letter code: Formate hydrogenlyase subunit 4 (307 aa).

The Periplasmic segment spans residues 1–2 (MS). Residues 3-23 (VLYPLIQALVLFAVAPLLSGI) form a helical membrane-spanning segment. Residues 24–67 (TRVARARLHNRRGPGVLQEYRDIIKLLGRQSVGPDASGWVFRLT) are Cytoplasmic-facing. The helical transmembrane segment at 68–88 (PYVMVGVMLTIATALPVVTVG) threads the bilayer. Residues 89 to 93 (SPLPQ) are Periplasmic-facing. Residues 94 to 114 (LGDLITLLYLFAIARFFFAIS) traverse the membrane as a helical segment. Residues 115–131 (GLDTGSPFTAIGASREA) are Cytoplasmic-facing. The helical transmembrane segment at 132 to 152 (MLGVLVEPMLLLGLWVAAQVA) threads the bilayer. Residues 153–167 (GSTNISNITDTVYHW) are Periplasmic-facing. A helical transmembrane segment spans residues 168–188 (PLSQSIPLVLALCACAFATFI). Residues 189 to 221 (EMGKLPFDLAEAEQELQEGPLSEYSGSGFGVMK) lie on the Cytoplasmic side of the membrane. A helical transmembrane segment spans residues 222 to 242 (WGISLKQLVVLQMFVGVFIPW). The Periplasmic portion of the chain corresponds to 243 to 253 (GQMETFTAGGL). A helical membrane pass occupies residues 254–274 (LLALVIAIVKLVVGVLVIALF). Topologically, residues 275–284 (ENSMARLRLD) are cytoplasmic. The helical transmembrane segment at 285-305 (ITPRITWAGFGFAFLAFVSLL) threads the bilayer. At 306 to 307 (AA) the chain is on the periplasmic side.

It belongs to the complex I subunit 1 family. As to quaternary structure, FHL comprises of a formate dehydrogenase, unidentified electron carriers and a hydrogenase (isoenzyme 3). In this non-energy conserving pathway molecular hydrogen and carbodioxide from formate are released.

The protein localises to the cell inner membrane. The polypeptide is Formate hydrogenlyase subunit 4 (hycD) (Escherichia coli (strain K12)).